The chain runs to 373 residues: Alanine racemase (373 aa).

Lys-40 functions as the Proton acceptor; specific for D-alanine in the catalytic mechanism. N6-(pyridoxal phosphate)lysine is present on Lys-40. Arg-140 contributes to the substrate binding site. Residue Tyr-268 is the Proton acceptor; specific for L-alanine of the active site. Met-315 is a substrate binding site.

The protein belongs to the alanine racemase family. It depends on pyridoxal 5'-phosphate as a cofactor.

The catalysed reaction is L-alanine = D-alanine. Its pathway is amino-acid biosynthesis; D-alanine biosynthesis; D-alanine from L-alanine: step 1/1. Its function is as follows. Catalyzes the interconversion of L-alanine and D-alanine. May also act on other amino acids. This chain is Alanine racemase (alr), found in Limosilactobacillus fermentum (strain NBRC 3956 / LMG 18251) (Lactobacillus fermentum).